We begin with the raw amino-acid sequence, 252 residues long: 3-dehydroquinate dehydratase (252 aa).

3-dehydroquinate-binding positions include 46 to 48 (EWR) and Arg-82. His-143 acts as the Proton donor/acceptor in catalysis. The active-site Schiff-base intermediate with substrate is the Lys-170. Residues Arg-212, Ser-231, and Gln-235 each coordinate 3-dehydroquinate.

It belongs to the type-I 3-dehydroquinase family. Homodimer.

The enzyme catalyses 3-dehydroquinate = 3-dehydroshikimate + H2O. The protein operates within metabolic intermediate biosynthesis; chorismate biosynthesis; chorismate from D-erythrose 4-phosphate and phosphoenolpyruvate: step 3/7. Its function is as follows. Involved in the third step of the chorismate pathway, which leads to the biosynthesis of aromatic amino acids. Catalyzes the cis-dehydration of 3-dehydroquinate (DHQ) and introduces the first double bond of the aromatic ring to yield 3-dehydroshikimate. In Listeria monocytogenes serotype 4a (strain HCC23), this protein is 3-dehydroquinate dehydratase.